A 310-amino-acid chain; its full sequence is Retrotransposon Gag-like protein 4 (310 aa).

Residues 278-295 (QLCLYCSQSGHFTRDCLA) form a CCHC-type zinc finger.

Involved in cognitive function in the brain, possibly via the noradrenergic system. The chain is Retrotransposon Gag-like protein 4 from Homo sapiens (Human).